The sequence spans 207 residues: 3-isopropylmalate dehydratase small subunit (207 aa).

The protein belongs to the LeuD family. LeuD type 1 subfamily. Heterodimer of LeuC and LeuD.

It catalyses the reaction (2R,3S)-3-isopropylmalate = (2S)-2-isopropylmalate. It functions in the pathway amino-acid biosynthesis; L-leucine biosynthesis; L-leucine from 3-methyl-2-oxobutanoate: step 2/4. Functionally, catalyzes the isomerization between 2-isopropylmalate and 3-isopropylmalate, via the formation of 2-isopropylmaleate. The polypeptide is 3-isopropylmalate dehydratase small subunit (leuD) (Buchnera aphidicola subsp. Rhopalosiphum padi).